The following is a 639-amino-acid chain: MAFSHAPSGWRTALLAGLIATVAWLPAIVAQEKTQADYFIHDLPGAPKPLLKMHAGHIEVDAEHNGNLFFWHYQNRHIADRQRTVLWLNGGPGCSSMDGAMMEIGPYRVREGGKLEYNNGSWDEFANLLFVDQPVGTGFSYVNTDSYLTELDQMAAHMVIFLEKWFALFPEYENDDLYIAGESYAGQHIPYIARAILDRNKKNQAKSPWPLKGLLIGNGWMSPVDQYLSYIPFAYQNGLMRSGTDMAKRVEEQQRICVQKLEAGGMDAVDTRDCEQIMVRILQETKNENADPMNQCLNMYDIRLRDDSSCGMNWPPDLAQVTPYLRRADVVQALHINTDKKTGWQECNGAVSSHFRAKNSKPSVKFLPEVIEQVPVLLFSGDKDFICNHVGTEAMIQNLQWNGGKGFEASPGVQNAKQDWMFEGEAAGTWQEARNLTYVVFYNSSHMVPFDYPRRTRDMLDRFMGVNIEAIGGAPADSLIDGEKGPLTSVGDHPNSTKAEEDKSKELKAAEWKAYTRSGEVALVIAVIVACICGFLLCRSRRAKSAYKGDDSDEGRESLLTGMGLDNFRRKERRQDVEAADFDERELDEVPKKSGKGYGQISSEKGRVPHNDSSFSLGVDSDDDEAGSSDRGRRKEESR.

The signal sequence occupies residues 1-30; sequence MAFSHAPSGWRTALLAGLIATVAWLPAIVA. At 31 to 517 the chain is on the lumenal side; that stretch reads QEKTQADYFI…KAAEWKAYTR (487 aa). Residue Asn-119 is glycosylated (N-linked (GlcNAc...) asparagine). Residues Ser-183 and Asp-384 contribute to the active site. 2 N-linked (GlcNAc...) asparagine glycosylation sites follow: Asn-435 and Asn-443. Residue His-446 is part of the active site. Positions 477–504 are disordered; the sequence is DSLIDGEKGPLTSVGDHPNSTKAEEDKS. N-linked (GlcNAc...) asparagine glycosylation occurs at Asn-495. A helical transmembrane segment spans residues 518–538; it reads SGEVALVIAVIVACICGFLLC. Residues 539–639 lie on the Cytoplasmic side of the membrane; that stretch reads RSRRAKSAYK…DRGRRKEESR (101 aa). The segment at 580-639 is disordered; sequence ADFDERELDEVPKKSGKGYGQISSEKGRVPHNDSSFSLGVDSDDDEAGSSDRGRRKEESR. Over residues 628–639 the composition is skewed to basic and acidic residues; the sequence is SSDRGRRKEESR.

This sequence belongs to the peptidase S10 family.

It is found in the golgi apparatus. The protein resides in the trans-Golgi network membrane. The enzyme catalyses Preferential release of a C-terminal arginine or lysine residue.. In terms of biological role, protease with a carboxypeptidase B-like function involved in the C-terminal processing of the lysine and arginine residues from protein precursors. Promotes cell fusion and is involved in the programmed cell death. This is Pheromone-processing carboxypeptidase kex1 (kex1) from Pyrenophora tritici-repentis (strain Pt-1C-BFP) (Wheat tan spot fungus).